The sequence spans 150 residues: Cytochrome c-type biogenesis protein CcmE (150 aa).

At 1–7 (MTRKQKR) the chain is on the cytoplasmic side. Residues 8-28 (LAIIGGGVGFLTAAVLLVMFA) form a helical; Signal-anchor for type II membrane protein membrane-spanning segment. Over 29–150 (FSQAVAYFYV…VTLGGEENIR (122 aa)) the chain is Periplasmic. The heme site is built by His123 and Tyr127.

This sequence belongs to the CcmE/CycJ family.

The protein resides in the cell inner membrane. Its function is as follows. Heme chaperone required for the biogenesis of c-type cytochromes. Transiently binds heme delivered by CcmC and transfers the heme to apo-cytochromes in a process facilitated by CcmF and CcmH. The polypeptide is Cytochrome c-type biogenesis protein CcmE (Sinorhizobium medicae (strain WSM419) (Ensifer medicae)).